We begin with the raw amino-acid sequence, 360 residues long: MPTHRVALIFGGQSTEHEISIISARAIANHIDTEAYELYPIYVGHDGAWFKGETAQKVLDLDMPAMLANTSADTIRERLREISFSDPRNRFLFDFSEEGIDVALPIIHGSTGEDGKIQGLLDMFSVPYTGCGVHASAMTMDKETTKICAEHAGLHIAPYTTIRKLRYQQDPQQVVSVILEEFTLPFFVKPASQGSSIGITKVHRPEELAAALEKAFMVDTKVLIEKTIEGREIEVAVLGNDSPVASVPGEVEPGGDFYDFTDKYINGKASLHIPARLPEEVLQKVSTEALKAYRALECRGMSRVDFFIEHATGKIILNEINTVPGFTGISMYPMMMDASGIDFSQLIDRLLQLALEKTLS.

The region spanning 146–352 is the ATP-grasp domain; that stretch reads KICAEHAGLH…FSQLIDRLLQ (207 aa). 179 to 234 contacts ATP; it reads LEEFTLPFFVKPASQGSSIGITKVHRPEELAAALEKAFMVDTKVLIEKTIEGREIE. Mg(2+) is bound by residues Asp-305, Glu-319, and Asn-321.

It belongs to the D-alanine--D-alanine ligase family. Mg(2+) is required as a cofactor. The cofactor is Mn(2+).

It localises to the cytoplasm. It catalyses the reaction 2 D-alanine + ATP = D-alanyl-D-alanine + ADP + phosphate + H(+). Its pathway is cell wall biogenesis; peptidoglycan biosynthesis. In terms of biological role, cell wall formation. This Prosthecochloris aestuarii (strain DSM 271 / SK 413) protein is D-alanine--D-alanine ligase.